The following is a 310-amino-acid chain: Protein-L-isoaspartate O-methyltransferase (310 aa).

Disordered regions lie at residues 1–46 and 60–79; these read MSGE…DKPA and ALPG…TVLK. The segment covering 14-34 has biased composition (basic and acidic residues); sequence EDLKRAPRKSEVRSGSGERHA. Over residues 35–46 the composition is skewed to low complexity; it reads ASAVPKAADKPA. Residue S157 is part of the active site.

This sequence belongs to the methyltransferase superfamily. L-isoaspartyl/D-aspartyl protein methyltransferase family.

Its subcellular location is the cytoplasm. The catalysed reaction is [protein]-L-isoaspartate + S-adenosyl-L-methionine = [protein]-L-isoaspartate alpha-methyl ester + S-adenosyl-L-homocysteine. Its function is as follows. Catalyzes the methyl esterification of L-isoaspartyl residues in peptides and proteins that result from spontaneous decomposition of normal L-aspartyl and L-asparaginyl residues. It plays a role in the repair and/or degradation of damaged proteins. The sequence is that of Protein-L-isoaspartate O-methyltransferase from Burkholderia ambifaria (strain ATCC BAA-244 / DSM 16087 / CCUG 44356 / LMG 19182 / AMMD) (Burkholderia cepacia (strain AMMD)).